The primary structure comprises 334 residues: DnaJ protein homolog 1 (334 aa).

One can recognise a J domain in the interval 4–68 (DFYKILGLER…KKRDIFDNYG (65 aa)). The residue at position 187 (serine 187) is a Phosphoserine.

It localises to the cytoplasm. The protein is DnaJ protein homolog 1 (DnaJ-1) of Drosophila melanogaster (Fruit fly).